We begin with the raw amino-acid sequence, 898 residues long: Dipeptidyl peptidase 8 (898 aa).

Active-site charge relay system residues include Ser-755, Asp-833, and His-865.

Belongs to the peptidase S9B family. DPPIV subfamily. Homodimer. Forms a ternary complex with NLRP1, composed of a DPP8 homodimer, one full-length NLRP1 protein, and one cleaved C-terminus of NLRP1 (NACHT, LRR and PYD domains-containing protein 1, C-terminus). Forms a ternary complex with CARD8, composed of a DPP8 homodimer, one full-length NLRP1 protein, and one cleaved C-terminus of CARD8 (Caspase recruitment domain-containing protein 8, C-terminus). In the ternary complex, only one subunit of the DPP8 homodimer is bound to NLRP1 or CARD8. As to expression, ubiquitously expressed, with highest levels in testis, placenta, prostate, muscle and brain.

Its subcellular location is the cytoplasm. It carries out the reaction Release of an N-terminal dipeptide, Xaa-Yaa-|-Zaa-, from a polypeptide, preferentially when Yaa is Pro, provided Zaa is neither Pro nor hydroxyproline.. Inhibited by zinc. Inhibited by the serine proteinase inhibitor 4-(2-aminoethyl)benzenesulphonyl fluoride (AEBSF), and by di-isopropylfluorophosphate. Specifically inhibited by isoindoline derivatives. Inhibited by Val-boroPro (Talabostat, PT-100), a non-selective inhibitor, which triggers pyroptosis in monocytes and macrophages. Functionally, dipeptidyl peptidase that cleaves off N-terminal dipeptides from proteins having a Pro or Ala residue at position 2. Acts as a key inhibitor of caspase-1-dependent monocyte and macrophage pyroptosis in resting cells by preventing activation of NLRP1 and CARD8. Sequesters the cleaved C-terminal part of NLRP1 and CARD8, which respectively constitute the active part of the NLRP1 and CARD8 inflammasomes, in a ternary complex, thereby preventing their oligomerization and activation. The dipeptidyl peptidase activity is required to suppress NLRP1 and CARD8; however, neither NLRP1 nor CARD8 are bona fide substrates of DPP8, suggesting the existence of substrate(s) required for NLRP1 and CARD8 inhibition. The sequence is that of Dipeptidyl peptidase 8 from Homo sapiens (Human).